Here is a 273-residue protein sequence, read N- to C-terminus: MDLKWDDFFNDYEWLIVFLKGMVKPAAALVVVLLAVILSYSQNLSLEGEMIYSVSRSFLQLSVIGFVLQFIFNQENSGWIILAYLFMVSVAGYTAGQRARHVPRGKYVAGLSILAGTSITMFLLVLLNVFPFTPRYMIPIAGMLVGNAMTVTGVTMKQLRDDIKMQLNLVETALALGATPRQATLQQVKRALVISLSPVLDSCKTVGLISLPGAMTGMIMGGASPLEAIQLQIVVMNMMVGAATVSSITSTYLCWPSFFTKAYQLQTHVFSSD.

7 helical membrane passes run 14–34 (WLIV…VVLL), 51–71 (IYSV…LQFI), 76–96 (NSGW…YTAG), 107–127 (YVAG…LVLL), 136–156 (YMIP…GVTM), 191–213 (ALVI…SLPG), and 228–248 (AIQL…VSSI).

Belongs to the UPF0014 family. Expressed in roots, leaves, stems, and flowers.

It is found in the cell membrane. Required for aluminum (Al) resistance/tolerance, probably by translocating Al from sensitive tissues such as growing roots to tissues less sensisitive to the toxic effects of Al. The chain is Protein ALUMINUM SENSITIVE 3 (ALS3) from Arabidopsis thaliana (Mouse-ear cress).